The following is a 1414-amino-acid chain: DNA-directed RNA polymerase subunit beta' (1414 aa).

Residues Cys70, Cys72, Cys85, and Cys88 each contribute to the Zn(2+) site. Mg(2+)-binding residues include Asp460, Asp462, and Asp464. Cys815, Cys889, Cys896, and Cys899 together coordinate Zn(2+). The segment at Glu1395–Ser1414 is disordered.

The protein belongs to the RNA polymerase beta' chain family. The RNAP catalytic core consists of 2 alpha, 1 beta, 1 beta' and 1 omega subunit. When a sigma factor is associated with the core the holoenzyme is formed, which can initiate transcription. Mg(2+) is required as a cofactor. The cofactor is Zn(2+).

It carries out the reaction RNA(n) + a ribonucleoside 5'-triphosphate = RNA(n+1) + diphosphate. In terms of biological role, DNA-dependent RNA polymerase catalyzes the transcription of DNA into RNA using the four ribonucleoside triphosphates as substrates. This is DNA-directed RNA polymerase subunit beta' from Janthinobacterium sp. (strain Marseille) (Minibacterium massiliensis).